Consider the following 112-residue polypeptide: Toxin-like structure LSTX-D10 (112 aa).

The N-terminal stretch at 1–20 (MMKVLVVVALLVTLISYSSS) is a signal peptide. A propeptide spanning residues 21–41 (EGIDDLEADELLSLMANEQTR) is cleaved from the precursor. 4 cysteine pairs are disulfide-bonded: Cys-45–Cys-60, Cys-52–Cys-69, Cys-59–Cys-84, and Cys-71–Cys-82.

This sequence belongs to the neurotoxin 19 (CSTX) family. 01 subfamily. In terms of tissue distribution, expressed by the venom gland.

The protein resides in the secreted. In Lycosa singoriensis (Wolf spider), this protein is Toxin-like structure LSTX-D10.